The following is a 195-amino-acid chain: Thymidine kinase (195 aa).

ATP-binding positions include 15-22 and 88-91; these read GSMFSGKS and DEVQ. Glu89 serves as the catalytic Proton acceptor. Residues Cys145, Cys148, Cys183, and Cys186 each contribute to the Zn(2+) site.

The protein belongs to the thymidine kinase family. As to quaternary structure, homotetramer.

Its subcellular location is the cytoplasm. The enzyme catalyses thymidine + ATP = dTMP + ADP + H(+). In Bacillus cereus (strain 03BB102), this protein is Thymidine kinase.